A 237-amino-acid polypeptide reads, in one-letter code: MGRAFEYRRAAKEKRWDKMSKLFPKLGKLITIAAKEGGADPEMNAKLRTAITNAKAQNMPKDNIDAAIKRALGKDGVVITEVNYEAKGPHGVLLFIECATDNPTRTVANVKSYINKIGGQLLQNGSLEFMFSHKAVFEFPKSHLHMDREELELVLIDAGLEELDEQEETLYVYGDYTQFGSLSSTLEELKIDVTKASLQRIANTPVEFSEEQLADIEKLIDRIEDDDDVQAVFTNIA.

It belongs to the TACO1 family.

It is found in the cytoplasm. The polypeptide is Probable transcriptional regulatory protein WS1016 (Wolinella succinogenes (strain ATCC 29543 / DSM 1740 / CCUG 13145 / JCM 31913 / LMG 7466 / NCTC 11488 / FDC 602W) (Vibrio succinogenes)).